The following is a 464-amino-acid chain: Chaperone SurA (464 aa).

The N-terminal stretch at 1–25 (MTRYFSIVLSLLLAVSCVFLPVASA) is a signal peptide. 2 consecutive PpiC domains span residues 175-277 (GAQY…KLVE) and 292-391 (ATEY…QRLG). The disordered stretch occupies residues 439-464 (PADDHQTPSAAVIPATGAVLPSATKH).

The protein resides in the periplasm. The enzyme catalyses [protein]-peptidylproline (omega=180) = [protein]-peptidylproline (omega=0). Functionally, chaperone involved in the correct folding and assembly of outer membrane proteins. Recognizes specific patterns of aromatic residues and the orientation of their side chains, which are found more frequently in integral outer membrane proteins. May act in both early periplasmic and late outer membrane-associated steps of protein maturation. The chain is Chaperone SurA from Xylella fastidiosa (strain 9a5c).